Consider the following 515-residue polypeptide: 3-[(3aS,4S,7aS)-7a-methyl-1,5-dioxo-octahydro-1H-inden-4-yl]propanoyl:CoA ligase (515 aa).

ATP contacts are provided by residues 185 to 193 (TSGTTGRSK), aspartate 398, arginine 413, and lysine 504.

It belongs to the ATP-dependent AMP-binding enzyme family.

The enzyme catalyses 3-[(3aS,4S,7aS)-7a-methyl-1,5-dioxo-octahydro-1H-inden-4-yl]propanoate + ATP + CoA = 3-[(3aS,4S,7aS)-7a-methyl-1,5-dioxo-octahydro-1H-inden-4-yl]propanoyl-CoA + AMP + diphosphate. Functionally, involved in the catabolism of the rings C and D of cholesterol. Catalyzes the ATP-dependent CoA thioesterification of 3aalpha-H-4alpha(3'-propanoate)-7abeta-methylhexahydro-1,5-indanedione (HIP). The polypeptide is 3-[(3aS,4S,7aS)-7a-methyl-1,5-dioxo-octahydro-1H-inden-4-yl]propanoyl:CoA ligase (Rhodococcus jostii (strain RHA1)).